We begin with the raw amino-acid sequence, 132 residues long: Large ribosomal subunit protein uL14 (132 aa).

The protein belongs to the universal ribosomal protein uL14 family. As to quaternary structure, part of the 50S ribosomal subunit. Forms a cluster with proteins L3 and L24e, part of which may contact the 16S rRNA in 2 intersubunit bridges.

In terms of biological role, binds to 23S rRNA. Forms part of two intersubunit bridges in the 70S ribosome. This chain is Large ribosomal subunit protein uL14, found in Methanosarcina acetivorans (strain ATCC 35395 / DSM 2834 / JCM 12185 / C2A).